The primary structure comprises 655 residues: tRNA uridine 5-carboxymethylaminomethyl modification enzyme MnmG (655 aa).

FAD is bound at residue 13–18 (GGGHAG). Position 281–295 (281–295 (GPRYCPSVEDKINRF)) interacts with NAD(+).

Belongs to the MnmG family. As to quaternary structure, homodimer. Heterotetramer of two MnmE and two MnmG subunits. FAD serves as cofactor.

It localises to the cytoplasm. Functionally, NAD-binding protein involved in the addition of a carboxymethylaminomethyl (cmnm) group at the wobble position (U34) of certain tRNAs, forming tRNA-cmnm(5)s(2)U34. The sequence is that of tRNA uridine 5-carboxymethylaminomethyl modification enzyme MnmG from Paracidovorax citrulli (strain AAC00-1) (Acidovorax citrulli).